Reading from the N-terminus, the 409-residue chain is Inactive serine protease 35 (409 aa).

The signal sequence occupies residues 1-17 (MLLWLIFFTPGWTLIDG). Asn-87 and Asn-107 each carry an N-linked (GlcNAc...) asparagine glycan. Residues 120 to 404 (VYGTDSRFSI…ICLWIHGNDA (285 aa)) enclose the Peptidase S1 domain. An intrachain disulfide couples Cys-150 to Cys-166. The segment covering 188-203 (RNKSGGKKRRGSKRSR) has biased composition (basic residues). A disordered region spans residues 188–246 (RNKSGGKKRRGSKRSRRETSGGDQREGPREHLQDRVKAGRRRKQSGGGQRVSEGRPSFR). The span at 204–224 (RETSGGDQREGPREHLQDRVK) shows a compositional bias: basic and acidic residues.

The protein belongs to the peptidase S1 family.

It localises to the secreted. The polypeptide is Inactive serine protease 35 (PRSS35) (Macaca mulatta (Rhesus macaque)).